Consider the following 636-residue polypeptide: ATP-dependent zinc metalloprotease FtsH (636 aa).

Residues methionine 1 to methionine 12 lie on the Cytoplasmic side of the membrane. The helical transmembrane segment at glycine 13 to isoleucine 33 threads the bilayer. The Periplasmic segment spans residues arginine 34–leucine 104. Residues leucine 105–phenylalanine 125 traverse the membrane as a helical segment. Residues methionine 126–glutamate 636 are Cytoplasmic-facing. Residue glycine 197–threonine 204 participates in ATP binding. Histidine 419 contributes to the Zn(2+) binding site. Residue glutamate 420 is part of the active site. Zn(2+) contacts are provided by histidine 423 and aspartate 497.

The protein in the central section; belongs to the AAA ATPase family. In the C-terminal section; belongs to the peptidase M41 family. As to quaternary structure, homohexamer. Zn(2+) serves as cofactor.

The protein localises to the cell inner membrane. Functionally, acts as a processive, ATP-dependent zinc metallopeptidase for both cytoplasmic and membrane proteins. Plays a role in the quality control of integral membrane proteins. This chain is ATP-dependent zinc metalloprotease FtsH, found in Neorickettsia risticii (strain Illinois).